The chain runs to 514 residues: F-box-like/WD repeat-containing protein TBL1XR1 (514 aa).

An N-acetylserine modification is found at serine 2. The LisH domain maps to 4–36; it reads SSDEVNFLVYRYLQESGFSHSAFTFGIESHISQ. The 46-residue stretch at 41–86 folds into the F-box-like domain; that stretch reads GALVPPAALISIIQKGLQYVEAEVSINEDGTLFDGRPIESLSLIDA. Lysine 102 carries the N6-acetyllysine modification. The tract at residues 114-139 is disordered; it reads AAAATNQQGSAKNGENTANGEENGAH. Over residues 124–135 the composition is skewed to low complexity; it reads AKNGENTANGEE. 8 WD repeats span residues 167–206, 223–262, 264–303, 306–344, 347–386, 389–437, 440–479, and 481–513; these read GHES…TSGP, PSNK…ASTL, QHKG…AKQQ, FHSA…PIKT, GHTN…CVHD, AHNK…CIHT, KHQE…LVHS, and RGTG…LDLR. Lysine 277 participates in a covalent cross-link: Glycyl lysine isopeptide (Lys-Gly) (interchain with G-Cter in SUMO2).

The protein belongs to the WD repeat EBI family. Component of the N-Cor repressor complex, at least composed of NCOR1, NCOR2, HDAC3, TBL1X, TBL1XR1, CORO2A and GPS2. Probable component of some E3 ubiquitin ligase complex. Interacts with histones H2B and H4. Interacts with MECP2; bridges interaction between MECP2 and NCOR1. Interacts with USP44.

The protein localises to the nucleus. Functionally, F-box-like protein involved in the recruitment of the ubiquitin/19S proteasome complex to nuclear receptor-regulated transcription units. Plays an essential role in transcription activation mediated by nuclear receptors. Probably acts as integral component of the N-Cor corepressor complex that mediates the recruitment of the 19S proteasome complex, leading to the subsequent proteasomal degradation of N-Cor complex, thereby allowing cofactor exchange, and transcription activation. This chain is F-box-like/WD repeat-containing protein TBL1XR1 (Tbl1xr1), found in Mus musculus (Mouse).